The chain runs to 183 residues: Dual-action ribosomal maturation protein DarP (183 aa).

The protein belongs to the DarP family.

It localises to the cytoplasm. Functionally, member of a network of 50S ribosomal subunit biogenesis factors which assembles along the 30S-50S interface, preventing incorrect 23S rRNA structures from forming. Promotes peptidyl transferase center (PTC) maturation. The polypeptide is Dual-action ribosomal maturation protein DarP (Citrobacter koseri (strain ATCC BAA-895 / CDC 4225-83 / SGSC4696)).